The following is a 397-amino-acid chain: Argininosuccinate synthase (397 aa).

9 to 17 (AYSGGLDTS) contacts ATP. Tyrosine 86 lines the L-citrulline pocket. Glycine 116 lines the ATP pocket. The L-aspartate site is built by threonine 118, asparagine 122, and aspartate 123. Asparagine 122 is a binding site for L-citrulline. Residues arginine 126, serine 174, glutamate 259, and tyrosine 271 each contribute to the L-citrulline site.

The protein belongs to the argininosuccinate synthase family. Type 1 subfamily. In terms of assembly, homotetramer.

It localises to the cytoplasm. It carries out the reaction L-citrulline + L-aspartate + ATP = 2-(N(omega)-L-arginino)succinate + AMP + diphosphate + H(+). Its pathway is amino-acid biosynthesis; L-arginine biosynthesis; L-arginine from L-ornithine and carbamoyl phosphate: step 2/3. In Lactococcus lactis subsp. cremoris (strain SK11), this protein is Argininosuccinate synthase.